The primary structure comprises 193 residues: MGYPELLRVLGEEAAREAREVRAAADRECARILSEARAAADGARAAVLARVREESEAHRRASREAIALERERALLVERRRQLERLRLEALARLRGAGGPALDAALLAELLPEAGDGPLEVIVDPGAEAEVGRALASLDPAVAARAAVRAAPEARGGVALVAGRRVLDDTLPSRLDRAWTVLEAEVARLLFGEG.

The protein belongs to the V-ATPase E subunit family.

In terms of biological role, produces ATP from ADP in the presence of a proton gradient across the membrane. In Anaeromyxobacter sp. (strain Fw109-5), this protein is V-type ATP synthase subunit E.